We begin with the raw amino-acid sequence, 222 residues long: MRSPIMQTGLDFTLVEDLVAGVDEVGRGPLCGAVVTAAVILDPARPILGLNDSKKLTEARREKLYVEIQEKALCWFIARAEVEEIDQLNILHATMLAMKRAVEGLSITPKLALIDGNRCPQLSVPSAPVVKGDSRVPAIAAASILAKVSRDREMAAFELIYPGYGIGGHKGYPTPVHLEALARLGPTPIHRRSFAPVRAAHEARASIMIGGSIPLPVGLLQD.

One can recognise an RNase H type-2 domain in the interval 17-206 (DLVAGVDEVG…VRAAHEARAS (190 aa)). Positions 23, 24, and 115 each coordinate a divalent metal cation.

Belongs to the RNase HII family. Mn(2+) is required as a cofactor. Requires Mg(2+) as cofactor.

It localises to the cytoplasm. The enzyme catalyses Endonucleolytic cleavage to 5'-phosphomonoester.. Endonuclease that specifically degrades the RNA of RNA-DNA hybrids. This is Ribonuclease HII from Pseudomonas savastanoi pv. phaseolicola (strain 1448A / Race 6) (Pseudomonas syringae pv. phaseolicola (strain 1448A / Race 6)).